A 404-amino-acid polypeptide reads, in one-letter code: Argininosuccinate synthase (404 aa).

ATP-binding positions include 10 to 18 (AYSGGVDTS) and Ala38. Tyr89 contacts L-citrulline. Gly119 contributes to the ATP binding site. 3 residues coordinate L-aspartate: Thr121, Asn125, and Asp126. Asn125 contributes to the L-citrulline binding site. L-citrulline is bound by residues Arg129, Ser177, Ser186, Glu262, and Tyr274.

The protein belongs to the argininosuccinate synthase family. Type 1 subfamily. As to quaternary structure, homotetramer.

Its subcellular location is the cytoplasm. It catalyses the reaction L-citrulline + L-aspartate + ATP = 2-(N(omega)-L-arginino)succinate + AMP + diphosphate + H(+). It functions in the pathway amino-acid biosynthesis; L-arginine biosynthesis; L-arginine from L-ornithine and carbamoyl phosphate: step 2/3. This is Argininosuccinate synthase from Prochlorococcus marinus (strain MIT 9301).